The following is a 4543-amino-acid chain: Low-density lipoprotein receptor-related protein 1 (4543 aa).

Positions 1 to 21 (MGPLLALAGCLLALLAAPAAR) are cleaved as a signal peptide. Over 22 to 4419 (ALEAPKTCSP…EFIVGEQQSG (4398 aa)) the chain is Extracellular. LDL-receptor class A domains are found at residues 27–68 (KTCS…ICPQ) and 72–112 (SRCQ…HCRE). Disulfide bonds link Cys29–Cys42, Cys36–Cys55, Cys49–Cys66, Cys74–Cys87, Cys81–Cys100, and Cys94–Cys110. Residues 113 to 151 (QLANCTALGCQHHCVPTLSGPACYCNNSFQLAEDRRSCK) form the EGF-like 1 domain. N-linked (GlcNAc...) asparagine glycosylation is present at Asn116. 6 cysteine pairs are disulfide-bonded: Cys117–Cys126, Cys122–Cys135, Cys137–Cys150, Cys156–Cys166, Cys162–Cys175, and Cys177–Cys190. An N-linked (GlcNAc...) asparagine glycan is attached at Asn138. Residues 152 to 191 (DFDECTVYGTCSQTCTNTEGSYTCSCVEGYLLQPDNRSCK) form the EGF-like 2; calcium-binding domain. N-linked (GlcNAc...) asparagine glycosylation is found at Asn187 and Asn276. LDL-receptor class B repeat units follow at residues 294 to 336 (GNFY…DPAM), 337 to 380 (GKVF…DLVS), and 381 to 424 (RLVY…FENY). N-linked (GlcNAc...) asparagine glycosylation is present at Asn359. A glycan (N-linked (GlcNAc...) asparagine) is linked at Asn448. The EGF-like 3 domain maps to 476 to 522 (RSHACEPDQFGKPGGCSDICLLGNSHKSRTCRCRSGFSLGSDGKSCK). Cystine bridges form between Cys480-Cys495, Cys491-Cys506, and Cys508-Cys521. LDL-receptor class B repeat units lie at residues 573–615 (GFIY…DWMG), 616–661 (NNLY…DPLN), 662–712 (GWMY…DIPA), and 713–756 (KILY…YSSF). A glycan (N-linked (GlcNAc...) asparagine) is linked at Asn731. Residues 801 to 841 (GSNKCRVNNGGCSSLCLATPRGRQCACAEDQILGADSVTCE) form the EGF-like 4 domain. Intrachain disulfides connect Cys805/Cys816, Cys812/Cys825, Cys827/Cys840, Cys852/Cys864, Cys859/Cys877, Cys871/Cys888, Cys893/Cys905, Cys900/Cys918, Cys912/Cys929, Cys934/Cys946, Cys941/Cys959, Cys953/Cys969, Cys974/Cys987, Cys982/Cys1000, Cys994/Cys1009, Cys1013/Cys1025, Cys1020/Cys1038, Cys1032/Cys1049, Cys1060/Cys1073, Cys1067/Cys1086, Cys1080/Cys1095, Cys1102/Cys1116, Cys1110/Cys1129, Cys1123/Cys1138, Cys1143/Cys1157, Cys1150/Cys1170, Cys1164/Cys1180, Cys1183/Cys1194, Cys1190/Cys1204, Cys1206/Cys1219, Cys1225/Cys1235, Cys1231/Cys1244, and Cys1246/Cys1259. LDL-receptor class A domains lie at 850 to 890 (PQCQ…LCHQ), 891 to 931 (HTCP…TCSA), 932 to 971 (RTCS…SCAY), 972 to 1011 (PTCF…GCSH), 1011 to 1051 (HSCS…NCTN), 1058 to 1097 (GGCH…NCEG), 1100 to 1140 (HVCD…NCES), and 1141 to 1180 (LVCK…GELC). Positions 869, 872, 874, 876, 882, and 883 each coordinate Ca(2+). N-linked (GlcNAc...) asparagine glycosylation is present at Asn926. The Ca(2+) site is built by Trp1030, Asp1033, Asp1035, Asp1037, Asp1043, and Glu1044. The N-linked (GlcNAc...) asparagine glycan is linked to Asn1048. Positions 1078, 1081, 1083, 1085, 1091, and 1092 each coordinate Ca(2+). 2 N-linked (GlcNAc...) asparagine glycosylation sites follow: Asn1152 and Asn1153. 2 consecutive EGF-like domains span residues 1181 to 1220 (DQCS…KTCQ) and 1221 to 1260 (IQSY…ESCR). N-linked (GlcNAc...) asparagine glycans are attached at residues Asn1193 and Asn1216. Residue Asn1305 is glycosylated (N-linked (GlcNAc...) asparagine). 5 LDL-receptor class B repeats span residues 1307 to 1353 (SSLY…DWIA), 1354 to 1396 (GNIY…DPRY), 1397 to 1443 (GILF…DYLE), 1444 to 1488 (KRIL…YGGE), and 1489 to 1529 (VYWT…YHPS). Residue Asn1509 is glycosylated (N-linked (GlcNAc...) asparagine). Residues 1534–1577 (APNPCEANGGKGPCSHLCLINYNRTLSCACPHLMKLDKDNTTCY) form the EGF-like 7 domain. Intrachain disulfides connect Cys1538-Cys1551, Cys1547-Cys1561, and Cys1563-Cys1576. Asn1556, Asn1573, Asn1614, and Asn1643 each carry an N-linked (GlcNAc...) asparagine glycan. 4 LDL-receptor class B repeats span residues 1625 to 1667 (QRIY…DWVS), 1668 to 1711 (RNLF…HPLH), 1712 to 1751 (GKLY…DYPE), and 1752 to 1796 (SKLY…MGDK). Residues Asn1721, Asn1731, Asn1761, and Asn1823 are each glycosylated (N-linked (GlcNAc...) asparagine). The 42-residue stretch at 1842–1883 (GSNPCSVNNGDCSQLCLPTSETSRSCMCTAGYSLKSGQQSCE) folds into the EGF-like 8 domain. 3 disulfides stabilise this stretch: Cys1846–Cys1857, Cys1853–Cys1867, and Cys1869–Cys1882. N-linked (GlcNAc...) asparagine glycosylation is present at Asn1929. LDL-receptor class B repeat units follow at residues 1930-1972 (DTIY…DWIA), 1973-2015 (GNIY…HPEK), 2016-2059 (GYLF…DYED), and 2060-2103 (GKLY…FEDY). Residues Asn1991 and Asn2044 are each glycosylated (N-linked (GlcNAc...) asparagine). N-linked (GlcNAc...) asparagine glycosylation is found at Asn2113 and Asn2123. Residues 2151-2191 (GTNVCAQNNGGCQQLCLFRGGGRRTCACAHGMLSEDGVSCR) enclose the EGF-like 9 domain. Cystine bridges form between Cys2155–Cys2166, Cys2162–Cys2176, and Cys2178–Cys2190. 5 LDL-receptor class B repeats span residues 2247–2288 (NRIF…HRGW), 2289–2337 (DTLY…DECQ), 2338–2382 (NLMF…DHRA), 2383–2425 (EKIY…YGDY), and 2426–2467 (IFWT…VAND). The N-linked (GlcNAc...) asparagine glycan is linked to Asn2466. The EGF-like 10 domain maps to 2472 to 2512 (ELSPCRVNNGGCQDLCLLTPKGHVNCSCRGERVLQEDFTCK). Cystine bridges form between Cys2476–Cys2487, Cys2483–Cys2497, and Cys2499–Cys2511. An N-linked (GlcNAc...) asparagine glycan is attached at Asn2496. Asn2515 is a glycosylation site (N-linked (GlcNAc...) asparagine). LDL-receptor class A domains lie at 2516–2557 (STCN…YCSS), 2558–2596 (RKCK…PCNK), 2597–2635 (TSCA…NCTA), 2636–2684 (TDCS…NCPG), 2688–2730 (PKCP…RQDK), 2730–2769 (KFCY…RCRL), and 2770–2812 (TTCS…GCLY). Disulfide bonds link Cys2518/Cys2531, Cys2526/Cys2544, Cys2538/Cys2555, Cys2560/Cys2572, Cys2567/Cys2585, and Cys2579/Cys2594. Asn2595 is a glycosylation site (N-linked (GlcNAc...) asparagine). Disulfide bonds link Cys2599–Cys2611, Cys2606–Cys2624, Cys2618–Cys2633, Cys2638–Cys2660, Cys2654–Cys2673, Cys2667–Cys2682, Cys2690–Cys2702, Cys2697–Cys2715, Cys2709–Cys2724, Cys2732–Cys2744, Cys2739–Cys2757, Cys2751–Cys2767, Cys2772–Cys2785, Cys2779–Cys2798, and Cys2792–Cys2810. N-linked (GlcNAc...) asparagine glycosylation is found at Asn2614 and Asn2632. Asn2813 is a glycosylation site (N-linked (GlcNAc...) asparagine). 3 LDL-receptor class A domains span residues 2814–2853 (NTCD…ECEY), 2854–2897 (PTCG…RCSS), and 2900–2938 (SKCN…NCFI). Cystine bridges form between Cys2816–Cys2828, Cys2823–Cys2841, Cys2835–Cys2851, Cys2856–Cys2868, Cys2863–Cys2882, Cys2876–Cys2895, Cys2902–Cys2914, Cys2909–Cys2927, Cys2921–Cys2936, Cys2941–Cys2953, Cys2949–Cys2962, Cys2964–Cys2977, Cys2983–Cys2993, Cys2989–Cys3002, and Cys3004–Cys3018. The N-linked (GlcNAc...) asparagine glycan is linked to Asn2903. An EGF-like 11 domain is found at 2939–2978 (NECLNKKLSGCSQECEDLKIGYKCRCRPGFRLKDDGKTCI). The EGF-like 12; calcium-binding domain maps to 2979-3019 (DIDECSTTYPCSQKCINTLGSYKCLCIEGYKLKPDNPTSCK). N-linked (GlcNAc...) asparagine glycans are attached at residues Asn3045 and Asn3086. LDL-receptor class B repeat units lie at residues 3066–3110 (QMIY…DWVG), 3111–3153 (GNLY…DVQN), 3154–3197 (GYLY…DYIN), 3198–3240 (SRIY…FEDY), and 3241–3281 (IYWT…YHPY). Residue Asn3176 is glycosylated (N-linked (GlcNAc...) asparagine). Residue Asn3261 is glycosylated (N-linked (GlcNAc...) asparagine). The EGF-like 13 domain occupies 3287-3328 (PNHPCKTNNAGCSNLCLLSPGGGHKCACPTNFYLGSDGKTCV). Disulfide bonds link Cys3291–Cys3302, Cys3298–Cys3312, and Cys3314–Cys3327. 11 consecutive LDL-receptor class A domains span residues 3329–3368 (SNCT…DCPE), 3369–3407 (FKCR…NCDI), 3408–3447 (HVCL…DCPE), 3448–3488 (VTCA…NCTQ), 3489–3530 (MTCG…ECDE), 3531–3569 (RTCE…SCTP), 3570–3608 (RPCS…DCIP), 3608–3646 (PRCE…DCGT), 3649–3689 (RTCP…ECLK), 3690–3730 (FQCP…DCES), and 3736–3776 (KSCS…SCSH). Residue Asn3330 is glycosylated (N-linked (GlcNAc...) asparagine). Intrachain disulfides connect Cys3331-Cys3343, Cys3338-Cys3356, Cys3350-Cys3366, Cys3371-Cys3383, Cys3378-Cys3396, Cys3390-Cys3405, Cys3410-Cys3423, Cys3417-Cys3436, Cys3430-Cys3445, Cys3450-Cys3463, Cys3457-Cys3476, Cys3470-Cys3486, Cys3491-Cys3504, Cys3498-Cys3517, Cys3511-Cys3528, Cys3533-Cys3545, Cys3540-Cys3558, Cys3552-Cys3567, Cys3572-Cys3584, Cys3579-Cys3597, Cys3591-Cys3606, Cys3610-Cys3622, Cys3617-Cys3635, Cys3629-Cys3644, Cys3658-Cys3676, Cys3670-Cys3687, Cys3692-Cys3706, Cys3700-Cys3719, Cys3713-Cys3728, Cys3738-Cys3752, Cys3747-Cys3765, Cys3759-Cys3774, Cys3783-Cys3796, Cys3790-Cys3805, Cys3807-Cys3820, Cys3826-Cys3836, Cys3832-Cys3845, and Cys3847-Cys3858. N-linked (GlcNAc...) asparagine glycosylation occurs at Asn3485. N-linked (GlcNAc...) asparagine glycosylation is present at Asn3659. EGF-like domains lie at 3779 to 3821 (KSYD…NSCQ) and 3822 to 3859 (DVNE…NMCK). The N-linked (GlcNAc...) asparagine glycan is linked to Asn3786. A glycan (N-linked (GlcNAc...) asparagine) is linked at Asn3837. 4 LDL-receptor class B repeats span residues 3910-3952 (NKIY…THLN), 3969-4011 (GNIY…DPLR), 4012-4055 (GTMY…DYHN), and 4056-4100 (ERLY…FEDY). The Recognition site for proteolytical processing motif lies at 3939 to 3942 (RNRR). Residue Asn3952 is glycosylated (N-linked (GlcNAc...) asparagine). 2 N-linked (GlcNAc...) asparagine glycosylation sites follow: Asn4074 and Asn4124. EGF-like domains are found at residues 4146–4182 (VTNP…GTCV), 4195–4231 (TTDT…ERCQ), 4231–4267 (QINQ…SRCD), 4267–4303 (DQQV…DRCQ), 4303–4339 (QYQQ…AQCQ), 4339–4374 (QDNK…PSCL), and 4372–4409 (SCLT…MRCE). Intrachain disulfides connect Cys4150/Cys4159, Cys4155/Cys4168, Cys4170/Cys4181, Cys4199/Cys4209, Cys4203/Cys4219, Cys4221/Cys4230, Cys4235/Cys4245, Cys4239/Cys4255, Cys4257/Cys4266, Cys4271/Cys4281, Cys4275/Cys4291, Cys4293/Cys4302, Cys4307/Cys4317, Cys4311/Cys4327, Cys4329/Cys4338, Cys4343/Cys4351, Cys4346/Cys4362, Cys4364/Cys4373, Cys4376/Cys4386, Cys4380/Cys4397, and Cys4399/Cys4408. N-linked (GlcNAc...) asparagine glycosylation occurs at Asn4178. The N-linked (GlcNAc...) asparagine glycan is linked to Asn4278. A helical transmembrane segment spans residues 4420–4443 (RTASIVIPILLLLLLLAVVAFAWY). The Cytoplasmic portion of the chain corresponds to 4444 to 4543 (KWRIKGAKGF…ADDDLTDPLA (100 aa)). Positions 4501–4506 (FTNPVY) match the NPXY motif motif. Positions 4522–4543 (STDEKRELLARGADDDLTDPLA) are disordered. The segment covering 4523 to 4535 (TDEKRELLARGAD) has biased composition (basic and acidic residues).

The protein belongs to the LDLR family. In terms of assembly, binds vitellogenin and LRPAP1 (alpha 2-macroglobulin). In terms of processing, cleaved into a 85 kDa membrane-spanning subunit (LRP-85) and a 515 kDa large extracellular domain (LRP-515) that remains non-covalently associated. Somatic.

The protein resides in the membrane. It localises to the coated pit. Endocytic receptor involved in endocytosis and in phagocytosis of apoptotic cells. Involved in cellular lipid homeostasis. Involved in the plasma clearance of chylomicron remnants and activated LRPAP1 (alpha 2-macroglobulin), as well as the local metabolism of complexes between plasminogen activators and their endogenous inhibitors. Acts as an alpha-2-macroglobulin receptor. The sequence is that of Low-density lipoprotein receptor-related protein 1 (LRP1) from Gallus gallus (Chicken).